The sequence spans 369 residues: Porphobilinogen deaminase, chloroplastic (369 aa).

A chloroplast-targeting transit peptide spans 1-46 (MEMTLYSSSSFSLPSAPSNPSLSLFTSSFRFSSFKTSPFSKCRIRA). An S-(dipyrrolylmethanemethyl)cysteine modification is found at C303.

Belongs to the HMBS family. Dipyrromethane is required as a cofactor.

It localises to the plastid. It is found in the chloroplast. It carries out the reaction 4 porphobilinogen + H2O = hydroxymethylbilane + 4 NH4(+). It functions in the pathway porphyrin-containing compound metabolism; protoporphyrin-IX biosynthesis; coproporphyrinogen-III from 5-aminolevulinate: step 2/4. The protein operates within porphyrin-containing compound metabolism; chlorophyll biosynthesis. Functionally, tetrapolymerization of the monopyrrole PBG into the hydroxymethylbilane pre-uroporphyrinogen in several discrete steps. The sequence is that of Porphobilinogen deaminase, chloroplastic (HEMC) from Pisum sativum (Garden pea).